A 742-amino-acid polypeptide reads, in one-letter code: ATP-dependent RNA helicase DBP7 (742 aa).

The segment at 45 to 100 (GKTVSRKRKANTTGDEGIIPGRGENSIKKLHKESSYSSEEQEKYKGRNAHNTQGRT) is disordered. A Q motif motif is present at residues 143–172 (DQFASLGVSSLLVSHLEQKMRIKKPTSIQK). The Helicase ATP-binding domain maps to 178 to 372 (IIGNAGKNDF…NVALKDYKLI (195 aa)). Residue 191-198 (AQTGSGKT) participates in ATP binding. Positions 307 to 310 (DEGD) match the DEGD box motif. In terms of domain architecture, Helicase C-terminal spans 405-605 (TLAATLNNIT…ILMPAFKDVN (201 aa)). The tract at residues 701 to 726 (AMGLQSSKDGNSEKKPTKENSKNKMF) is disordered. Over residues 710-722 (GNSEKKPTKENSK) the composition is skewed to basic and acidic residues.

This sequence belongs to the DEAD box helicase family. DDX31/DBP7 subfamily.

It localises to the nucleus. The protein localises to the nucleolus. It catalyses the reaction ATP + H2O = ADP + phosphate + H(+). In terms of biological role, ATP-binding RNA helicase involved in the biogenesis of 60S ribosomal subunits and is required for the normal formation of 25S and 5.8S rRNAs. This Saccharomyces cerevisiae (strain ATCC 204508 / S288c) (Baker's yeast) protein is ATP-dependent RNA helicase DBP7 (DBP7).